Consider the following 605-residue polypeptide: Probable potassium transport system protein Kup 3 (605 aa).

12 helical membrane-spanning segments follow: residues 16-36, 49-69, 97-117, 138-158, 170-190, 212-232, 247-267, 287-307, 339-359, 368-388, 397-417, and 418-438; these read ALGL…TVIF, ILSL…AWLA, VAFA…DAVI, GLST…LFSV, FGPI…VSAF, GLAG…GEAL, AWHF…VFAI, LYIP…QAII, IYLG…MLVF, AYGM…IIVF, ALVA…TFSK, and LPHG…TIII.

The protein belongs to the HAK/KUP transporter (TC 2.A.72) family.

The protein localises to the cell inner membrane. It carries out the reaction K(+)(in) + H(+)(in) = K(+)(out) + H(+)(out). Its function is as follows. Transport of potassium into the cell. Likely operates as a K(+):H(+) symporter. This Geobacter sulfurreducens (strain ATCC 51573 / DSM 12127 / PCA) protein is Probable potassium transport system protein Kup 3.